Reading from the N-terminus, the 291-residue chain is Nucleotide-binding protein PPA0813 (291 aa).

Position 17–24 (17–24 (GISGAGRR)) interacts with ATP. 66 to 69 (DVRS) is a binding site for GTP.

This sequence belongs to the RapZ-like family.

Functionally, displays ATPase and GTPase activities. This is Nucleotide-binding protein PPA0813 from Cutibacterium acnes (strain DSM 16379 / KPA171202) (Propionibacterium acnes).